Consider the following 349-residue polypeptide: Interleukin-10 receptor subunit beta (349 aa).

Residues 1 to 19 form the signal peptide; that stretch reads MAPCVAGWLGGFLLVPALG. Residues 20–220 lie on the Extracellular side of the membrane; sequence MIPPPEKVRM…RTGNDEITPS (201 aa). Fibronectin type-III domains are found at residues 23 to 111 and 112 to 215; these read PPEK…VEDT and IIGP…TGND. The N-linked (GlcNAc...) asparagine glycan is linked to N49. C66 and C74 are disulfide-bonded. N-linked (GlcNAc...) asparagine glycosylation is found at N102, N161, and N199. C188 and C209 are disulfide-bonded. Residues 221–241 form a helical membrane-spanning segment; it reads WIVAIILIVSVLVVFLFLLGC. Residues 242–349 are Cytoplasmic-facing; sequence FVVLWLIYKK…PKLLTSTSEV (108 aa). S299 carries the post-translational modification Phosphoserine. Positions 300-349 are disordered; the sequence is EESEGSKQSPEDNCASEPPSDPGPRELESKDEAPSPPHDDPKLLTSTSEV. Residues 322–341 show a composition bias toward basic and acidic residues; that stretch reads GPRELESKDEAPSPPHDDPK.

The protein belongs to the type II cytokine receptor family. In terms of assembly, heterodimer with IFNLR1.

It localises to the membrane. In terms of biological role, shared cell surface receptor required for the activation of five class 2 cytokines: IL10, IL22, IL26, IL28, and IFNL1. The IFNLR1/IL10RB dimer is a receptor for the cytokine ligands IFNL2 and IFNL3 and mediates their antiviral activity. The ligand/receptor complex stimulate the activation of the JAK/STAT signaling pathway leading to the expression of IFN-stimulated genes (ISG), which contribute to the antiviral state. The protein is Interleukin-10 receptor subunit beta (Il10rb) of Mus musculus (Mouse).